The following is a 354-amino-acid chain: MEPVISPTLDSKQSWSIFILDHEESLASPRKLNIPNPENVYSENRRYFADQDFRRPRHKPDQNMVEYWVPPEKTSVAKNNTTGQAVTPGQAKKLNQVCPASAPNGKRAMKIPKVKEPRGENSSKKSSADQAPGPFRVMYWKVGQYFEKASGTVNHHYQKVVLFRNRMKANKVAPIHTKVQSRHLELEPLCCLSSCLVRGGCTTVVVFELCYVVATALCIFEAMFRKKFALWEPFPKSFNGWFAHPLFYYTIAVYDVALFVIAIATARALVNFDKAVLHIHYIFCIFSFFINFFFLIFSIWSLVSPGSLTFTPINCLLIFCFLYQLPLNIWGFFVVKSCRDFFALIHVFVSLAEA.

The interval 96-130 (QVCPASAPNGKRAMKIPKVKEPRGENSSKKSSADQ) is disordered. Positions 113–127 (KVKEPRGENSSKKSS) are enriched in basic and acidic residues.

This is an uncharacterized protein from Caenorhabditis elegans.